A 357-amino-acid polypeptide reads, in one-letter code: uncharacterized protein (357 aa).

Positions 6–32 form a DNA-binding region, zn(2)-C6 fungal-type; the sequence is CIVCRQKKIKCDRKNPCTNCEQAGEKC.

The protein localises to the nucleus. This is an uncharacterized protein from Schizosaccharomyces pombe (strain 972 / ATCC 24843) (Fission yeast).